Consider the following 207-residue polypeptide: Dephospho-CoA kinase (207 aa).

A compositionally biased stretch (polar residues) spans 1–11 (MTRSPAPSSPT). A disordered region spans residues 1–21 (MTRSPAPSSPTHPRRLGLTGS). A DPCK domain is found at 15-207 (RLGLTGSIGA…DAALRQLEIT (193 aa)). Residue 23-28 (GAGKST) participates in ATP binding.

The protein belongs to the CoaE family.

It is found in the cytoplasm. It catalyses the reaction 3'-dephospho-CoA + ATP = ADP + CoA + H(+). It functions in the pathway cofactor biosynthesis; coenzyme A biosynthesis; CoA from (R)-pantothenate: step 5/5. Functionally, catalyzes the phosphorylation of the 3'-hydroxyl group of dephosphocoenzyme A to form coenzyme A. The sequence is that of Dephospho-CoA kinase from Deinococcus radiodurans (strain ATCC 13939 / DSM 20539 / JCM 16871 / CCUG 27074 / LMG 4051 / NBRC 15346 / NCIMB 9279 / VKM B-1422 / R1).